Consider the following 340-residue polypeptide: DNA-directed RNA polymerase subunit alpha (340 aa).

The interval 1–226 is alpha N-terminal domain (alpha-NTD); sequence MLIAQRPSLT…ELFGLARELN (226 aa). The tract at residues 243–340 is alpha C-terminal domain (alpha-CTD); the sequence is LAADLALPIE…DAGFVETEQY (98 aa).

The protein belongs to the RNA polymerase alpha chain family. Homodimer. The RNAP catalytic core consists of 2 alpha, 1 beta, 1 beta' and 1 omega subunit. When a sigma factor is associated with the core the holoenzyme is formed, which can initiate transcription. In terms of processing, the last 19 amino acids in the C-terminal part are cleaved in the spore.

It carries out the reaction RNA(n) + a ribonucleoside 5'-triphosphate = RNA(n+1) + diphosphate. Functionally, DNA-dependent RNA polymerase catalyzes the transcription of DNA into RNA using the four ribonucleoside triphosphates as substrates. The chain is DNA-directed RNA polymerase subunit alpha from Streptomyces granaticolor.